The sequence spans 433 residues: Histidinol dehydrogenase 2 (433 aa).

Residues Y130, Q192, and N215 each contribute to the NAD(+) site. 3 residues coordinate substrate: S238, Q260, and H263. Zn(2+) is bound by residues Q260 and H263. Residues E328 and H329 each act as proton acceptor in the active site. H329, D362, E416, and H421 together coordinate substrate. D362 serves as a coordination point for Zn(2+). Zn(2+) is bound at residue H421.

This sequence belongs to the histidinol dehydrogenase family. Requires Zn(2+) as cofactor.

The enzyme catalyses L-histidinol + 2 NAD(+) + H2O = L-histidine + 2 NADH + 3 H(+). Its pathway is amino-acid biosynthesis; L-histidine biosynthesis; L-histidine from 5-phospho-alpha-D-ribose 1-diphosphate: step 9/9. Functionally, catalyzes the sequential NAD-dependent oxidations of L-histidinol to L-histidinaldehyde and then to L-histidine. The polypeptide is Histidinol dehydrogenase 2 (Trichormus variabilis (strain ATCC 29413 / PCC 7937) (Anabaena variabilis)).